Reading from the N-terminus, the 157-residue chain is Transcription elongation factor GreA (157 aa).

A coiled-coil region spans residues 46-73 (AEYHSARERQSFIEGRIAELEEIISAAE).

Belongs to the GreA/GreB family.

Its function is as follows. Necessary for efficient RNA polymerase transcription elongation past template-encoded arresting sites. The arresting sites in DNA have the property of trapping a certain fraction of elongating RNA polymerases that pass through, resulting in locked ternary complexes. Cleavage of the nascent transcript by cleavage factors such as GreA or GreB allows the resumption of elongation from the new 3'terminus. GreA releases sequences of 2 to 3 nucleotides. This chain is Transcription elongation factor GreA, found in Acidiphilium cryptum (strain JF-5).